The primary structure comprises 435 residues: Trigger factor (435 aa).

Residues 164–249 (GDFAKFDFEG…LHEIQGKKAG (86 aa)) enclose the PPIase FKBP-type domain.

This sequence belongs to the FKBP-type PPIase family. Tig subfamily.

The protein resides in the cytoplasm. It carries out the reaction [protein]-peptidylproline (omega=180) = [protein]-peptidylproline (omega=0). Its function is as follows. Involved in protein export. Acts as a chaperone by maintaining the newly synthesized protein in an open conformation. Functions as a peptidyl-prolyl cis-trans isomerase. This chain is Trigger factor, found in Campylobacter fetus subsp. fetus (strain 82-40).